A 214-amino-acid chain; its full sequence is Thiamine-phosphate synthase (214 aa).

4-amino-2-methyl-5-(diphosphooxymethyl)pyrimidine contacts are provided by residues 37–41 and asparagine 73; that span reads QYREK. Positions 74 and 93 each coordinate Mg(2+). 4-amino-2-methyl-5-(diphosphooxymethyl)pyrimidine is bound at residue serine 112. 139–141 serves as a coordination point for 2-[(2R,5Z)-2-carboxy-4-methylthiazol-5(2H)-ylidene]ethyl phosphate; that stretch reads TIS. Lysine 142 serves as a coordination point for 4-amino-2-methyl-5-(diphosphooxymethyl)pyrimidine. Residues glycine 171 and 191-192 contribute to the 2-[(2R,5Z)-2-carboxy-4-methylthiazol-5(2H)-ylidene]ethyl phosphate site; that span reads IS.

Belongs to the thiamine-phosphate synthase family. Mg(2+) is required as a cofactor.

The catalysed reaction is 2-[(2R,5Z)-2-carboxy-4-methylthiazol-5(2H)-ylidene]ethyl phosphate + 4-amino-2-methyl-5-(diphosphooxymethyl)pyrimidine + 2 H(+) = thiamine phosphate + CO2 + diphosphate. It carries out the reaction 2-(2-carboxy-4-methylthiazol-5-yl)ethyl phosphate + 4-amino-2-methyl-5-(diphosphooxymethyl)pyrimidine + 2 H(+) = thiamine phosphate + CO2 + diphosphate. It catalyses the reaction 4-methyl-5-(2-phosphooxyethyl)-thiazole + 4-amino-2-methyl-5-(diphosphooxymethyl)pyrimidine + H(+) = thiamine phosphate + diphosphate. Its pathway is cofactor biosynthesis; thiamine diphosphate biosynthesis; thiamine phosphate from 4-amino-2-methyl-5-diphosphomethylpyrimidine and 4-methyl-5-(2-phosphoethyl)-thiazole: step 1/1. Functionally, condenses 4-methyl-5-(beta-hydroxyethyl)thiazole monophosphate (THZ-P) and 2-methyl-4-amino-5-hydroxymethyl pyrimidine pyrophosphate (HMP-PP) to form thiamine monophosphate (TMP). This is Thiamine-phosphate synthase from Listeria innocua serovar 6a (strain ATCC BAA-680 / CLIP 11262).